A 281-amino-acid chain; its full sequence is Nucleoid occlusion protein (281 aa).

Residues glutamate 145–leucine 164 constitute a DNA-binding region (H-T-H motif).

It belongs to the ParB family.

The protein resides in the cytoplasm. It localises to the nucleoid. Functionally, effects nucleoid occlusion by binding relatively nonspecifically to DNA and preventing the assembly of the division machinery in the vicinity of the nucleoid, especially under conditions that disturb the cell cycle. It helps to coordinate cell division and chromosome segregation by preventing the formation of the Z ring through the nucleoid, which would cause chromosome breakage. This chain is Nucleoid occlusion protein, found in Geobacillus sp. (strain WCH70).